Here is a 133-residue protein sequence, read N- to C-terminus: Agouti-signaling protein (133 aa).

The signal sequence occupies residues 1 to 22 (MDVIHLFLATLLVSLCFLTAYS). Over residues 26 to 36 (PEEKPKDDRSL) the composition is skewed to basic and acidic residues. Positions 26–83 (PEEKPKDDRSLRNNSSMNLLDSPSVSIMALNKKSKKISRKEAEKKKRSSKKKASMTKV) are disordered. The span at 37–50 (RNNSSMNLLDSPSV) shows a compositional bias: polar residues. Asn38 and Asn39 each carry an N-linked (GlcNAc...) asparagine glycan. Over residues 70-79 (KKRSSKKKAS) the composition is skewed to basic residues. 5 cysteine pairs are disulfide-bonded: Cys94-Cys109, Cys101-Cys115, Cys108-Cys126, Cys112-Cys133, and Cys117-Cys124. The region spanning 94–133 (CVATRDSCKPPAPACCDPCASCQCRFFRSACSCRVLTRTC) is the Agouti domain.

The protein localises to the secreted. In terms of biological role, involved in the regulation of melanogenesis. The binding of ASP to MC1R precludes alpha-MSH initiated signaling and thus blocks production of cAMP, leading to a down-regulation of eumelanogenesis (brown/black pigment) and thus increasing synthesis of pheomelanin (yellow/red pigment). This is Agouti-signaling protein (ASIP) from Equus caballus (Horse).